The chain runs to 512 residues: Centrosomal protein CCDC61 (512 aa).

Residue M1 is modified to N-acetylmethionine. Residues 1-143 form a head domain region; that stretch reads MDQPAGLQVD…PLPLPYQGKP (143 aa). Coiled coils occupy residues 178–205 and 248–275; these read IWHL…SREE and CRRL…LTSE. The disordered stretch occupies residues 276 to 477; the sequence is LALYKRGRRT…KSLANSGGWV (202 aa). The residue at position 285 (T285) is a Phosphothreonine. Residues 293 to 306 show a composition bias toward basic and acidic residues; that stretch reads TREDRASSSRERSA. 4 positions are modified to phosphoserine: S334, S336, S373, and S376. Over residues 407–425 the composition is skewed to low complexity; sequence RSSSVDSFRSRCSSASSCS. S447 and S473 each carry phosphoserine.

Belongs to the CCDC61 family. Forms homodimers (via head domain). Interacts with CEP170. Interacts with PCM1 and CEP131. Binds tubulin.

The protein resides in the cytoplasm. The protein localises to the cytoskeleton. It localises to the microtubule organizing center. Its subcellular location is the centrosome. It is found in the centriolar satellite. The protein resides in the cilium basal body. In terms of biological role, microtubule-binding centrosomal protein required for centriole cohesion, independently of the centrosome-associated protein/CEP250 and rootletin/CROCC linker. In interphase, required for anchoring microtubule at the mother centriole subdistal appendages and for centrosome positioning. During mitosis, may be involved in spindle assembly and chromatin alignment by regulating the organization of spindle microtubules into a symmetrical structure. Has been proposed to play a role in CEP170 recruitment to centrosomes. However, this function could not be confirmed. Plays a non-essential role in ciliogenesis. The chain is Centrosomal protein CCDC61 from Homo sapiens (Human).